The chain runs to 144 residues: Large ribosomal subunit protein uL15 (144 aa).

The disordered stretch occupies residues 1–55; it reads MQLNELKPVAGSRFKRLRKGRGLSSGHGFTSGRGTKGQKAHGKTRLGFEGGQMPL. Gly residues predominate over residues 23–35; sequence LSSGHGFTSGRGT.

It belongs to the universal ribosomal protein uL15 family. Part of the 50S ribosomal subunit.

In terms of biological role, binds to the 23S rRNA. The polypeptide is Large ribosomal subunit protein uL15 (Limosilactobacillus fermentum (strain NBRC 3956 / LMG 18251) (Lactobacillus fermentum)).